The chain runs to 550 residues: Neuronal acetylcholine receptor subunit alpha-9-II (550 aa).

The first 20 residues, M1–S20, serve as a signal peptide directing secretion. Over A21–S233 the chain is Extracellular. The N-linked (GlcNAc...) asparagine glycan is linked to N52. The cysteines at positions 150 and 164 are disulfide-linked. The N-linked (GlcNAc...) asparagine glycan is linked to N165. C214 and C215 are oxidised to a cystine. A run of 3 helical transmembrane segments spans residues F234 to F254, V264 to S284, and Y298 to I318. Over H319–R528 the chain is Cytoplasmic. The tract at residues T357–F439 is disordered. The segment covering S358 to S367 has biased composition (low complexity). The segment covering R413 to H422 has biased composition (basic residues). A helical transmembrane segment spans residues F529–A549.

The protein belongs to the ligand-gated ion channel (TC 1.A.9) family. Acetylcholine receptor (TC 1.A.9.1) subfamily. In terms of tissue distribution, expressed in the brain, liver, olfactory mucosa, pituitary gland and hair cells of the saccule.

It localises to the postsynaptic cell membrane. Its subcellular location is the cell membrane. The chain is Neuronal acetylcholine receptor subunit alpha-9-II from Oncorhynchus mykiss (Rainbow trout).